The primary structure comprises 444 residues: Zinc protease PqqE (444 aa).

Positions 1-28 (MKHFSVKRLLGLSSVLLVTLGASMHAQS) are cleaved as a signal peptide. Histidine 78 contributes to the Zn(2+) binding site. Glutamate 81 acts as the Proton acceptor in catalysis. The Zn(2+) site is built by histidine 82 and glutamate 158.

This sequence belongs to the peptidase M16 family. Zn(2+) serves as cofactor.

The protein localises to the secreted. With respect to regulation, can function alone, but full activity requires the presence of the non-peptidase homolog YmxG. Virulence factor that cleaves the cytoplasmic domain of the human junctional adhesion molecule A (JAM-A), compromising gastric epithelial barrier function and cell-cell adhesion. Cleavage of JAM-A occurs after Ala-285 or, to a lesser extent, before Ala-285. The polypeptide is Zinc protease PqqE (Helicobacter pylori (strain ATCC 700392 / 26695) (Campylobacter pylori)).